We begin with the raw amino-acid sequence, 608 residues long: 1-deoxy-D-xylulose-5-phosphate synthase (608 aa).

Thiamine diphosphate contacts are provided by residues His-80 and Gly-121 to Ser-123. Mg(2+) is bound at residue Asp-152. Thiamine diphosphate contacts are provided by residues Gly-153–Ala-154, Asn-181, Tyr-282, and Glu-357. Asn-181 provides a ligand contact to Mg(2+).

This sequence belongs to the transketolase family. DXPS subfamily. In terms of assembly, homodimer. Requires Mg(2+) as cofactor. The cofactor is thiamine diphosphate.

The catalysed reaction is D-glyceraldehyde 3-phosphate + pyruvate + H(+) = 1-deoxy-D-xylulose 5-phosphate + CO2. Its pathway is metabolic intermediate biosynthesis; 1-deoxy-D-xylulose 5-phosphate biosynthesis; 1-deoxy-D-xylulose 5-phosphate from D-glyceraldehyde 3-phosphate and pyruvate: step 1/1. In terms of biological role, catalyzes the acyloin condensation reaction between C atoms 2 and 3 of pyruvate and glyceraldehyde 3-phosphate to yield 1-deoxy-D-xylulose-5-phosphate (DXP). The protein is 1-deoxy-D-xylulose-5-phosphate synthase of Buchnera aphidicola subsp. Acyrthosiphon pisum (strain 5A).